The following is a 245-amino-acid chain: Rhamnosyl O-methyltransferase (245 aa).

The first 38 residues, 1 to 38, serve as a signal peptide directing secretion; sequence MGLVWRSRTSLVGQLIGLVRLVASFAAQLFYRPSDAVA.

It belongs to the rhamnosyl O-methyltransferase family.

Its function is as follows. Catalyzes the O-methylation of the hydroxyl group located on C-2 of the first rhamnosyl residue linked to the phenolic group of glycosylated phenolphthiocerol dimycocerosates (PGL) and p-hydroxybenzoic acid derivatives (p-HBAD). The protein is Rhamnosyl O-methyltransferase of Mycobacterium bovis (strain ATCC BAA-935 / AF2122/97).